The chain runs to 83 residues: NAD(P)H-quinone oxidoreductase subunit L (83 aa).

The next 2 membrane-spanning stretches (helical) occupy residues 15 to 35 and 53 to 73; these read LMVL…VPLL and LSAY…APFL.

It belongs to the complex I NdhL subunit family. NDH-1 can be composed of about 15 different subunits; different subcomplexes with different compositions have been identified which probably have different functions.

The protein localises to the cellular thylakoid membrane. The enzyme catalyses a plastoquinone + NADH + (n+1) H(+)(in) = a plastoquinol + NAD(+) + n H(+)(out). The catalysed reaction is a plastoquinone + NADPH + (n+1) H(+)(in) = a plastoquinol + NADP(+) + n H(+)(out). Functionally, NDH-1 shuttles electrons from an unknown electron donor, via FMN and iron-sulfur (Fe-S) centers, to quinones in the respiratory and/or the photosynthetic chain. The immediate electron acceptor for the enzyme in this species is believed to be plastoquinone. Couples the redox reaction to proton translocation, and thus conserves the redox energy in a proton gradient. Cyanobacterial NDH-1 also plays a role in inorganic carbon-concentration. The polypeptide is NAD(P)H-quinone oxidoreductase subunit L (Prochlorococcus marinus (strain MIT 9303)).